Here is a 373-residue protein sequence, read N- to C-terminus: Homoserine O-acetyltransferase (373 aa).

The 305-residue stretch at 52-356 (NVVMVLHALT…VYGHDGFLVE (305 aa)) folds into the AB hydrolase-1 domain. The active-site Nucleophile is the serine 157. Arginine 227 is a substrate binding site. Catalysis depends on residues aspartate 320 and histidine 350. Residue aspartate 351 coordinates substrate.

Belongs to the AB hydrolase superfamily. MetX family. Homodimer.

The protein localises to the cytoplasm. The catalysed reaction is L-homoserine + acetyl-CoA = O-acetyl-L-homoserine + CoA. It functions in the pathway amino-acid biosynthesis; L-methionine biosynthesis via de novo pathway; O-acetyl-L-homoserine from L-homoserine: step 1/1. Its function is as follows. Transfers an acetyl group from acetyl-CoA to L-homoserine, forming acetyl-L-homoserine. This Mycobacterium sp. (strain KMS) protein is Homoserine O-acetyltransferase.